The chain runs to 397 residues: Bifunctional enzyme IspD/IspF (397 aa).

A 2-C-methyl-D-erythritol 4-phosphate cytidylyltransferase region spans residues 1 to 233 (MCAKKYKIAA…KLLFEEPKFR (233 aa)). Residues 233–397 (RVGAGYDIHK…VLLHTNFYWK (165 aa)) form a 2-C-methyl-D-erythritol 2,4-cyclodiphosphate synthase region. A divalent metal cation is bound by residues Asp-239 and His-241. 4-CDP-2-C-methyl-D-erythritol 2-phosphate contacts are provided by residues 239 to 241 (DIH) and 270 to 271 (HS). His-278 provides a ligand contact to a divalent metal cation. 4-CDP-2-C-methyl-D-erythritol 2-phosphate-binding positions include 292–294 (DIG), 368–371 (TTAE), Tyr-375, and Arg-378.

It in the N-terminal section; belongs to the IspD/TarI cytidylyltransferase family. IspD subfamily. This sequence in the C-terminal section; belongs to the IspF family. The cofactor is a divalent metal cation.

It catalyses the reaction 2-C-methyl-D-erythritol 4-phosphate + CTP + H(+) = 4-CDP-2-C-methyl-D-erythritol + diphosphate. It carries out the reaction 4-CDP-2-C-methyl-D-erythritol 2-phosphate = 2-C-methyl-D-erythritol 2,4-cyclic diphosphate + CMP. The protein operates within isoprenoid biosynthesis; isopentenyl diphosphate biosynthesis via DXP pathway; isopentenyl diphosphate from 1-deoxy-D-xylulose 5-phosphate: step 2/6. Its pathway is isoprenoid biosynthesis; isopentenyl diphosphate biosynthesis via DXP pathway; isopentenyl diphosphate from 1-deoxy-D-xylulose 5-phosphate: step 4/6. Functionally, bifunctional enzyme that catalyzes the formation of 4-diphosphocytidyl-2-C-methyl-D-erythritol from CTP and 2-C-methyl-D-erythritol 4-phosphate (MEP) (IspD), and catalyzes the conversion of 4-diphosphocytidyl-2-C-methyl-D-erythritol 2-phosphate (CDP-ME2P) to 2-C-methyl-D-erythritol 2,4-cyclodiphosphate (ME-CPP) with a corresponding release of cytidine 5-monophosphate (CMP) (IspF). The protein is Bifunctional enzyme IspD/IspF of Wolbachia pipientis wMel.